The primary structure comprises 1200 residues: Ice nucleation protein (1200 aa).

The interval 176–1151 (ATYGSTLSGD…LSAGEDSILI (976 aa)) is octapeptide periodicity.

Belongs to the bacterial ice nucleation protein family.

Its subcellular location is the cell outer membrane. Functionally, ice nucleation proteins enable bacteria to nucleate crystallization in supercooled water. This is Ice nucleation protein (inaZ) from Pseudomonas syringae pv. syringae.